We begin with the raw amino-acid sequence, 163 residues long: Phosphopantetheine adenylyltransferase (163 aa).

Residue Thr-11 coordinates substrate. Residues 11 to 12 (TF) and His-19 each bind ATP. Positions 43, 75, and 89 each coordinate substrate. ATP-binding positions include 90–92 (GLR), Glu-100, and 125–131 (YSFISST).

It belongs to the bacterial CoaD family. In terms of assembly, homohexamer. It depends on Mg(2+) as a cofactor.

The protein localises to the cytoplasm. It carries out the reaction (R)-4'-phosphopantetheine + ATP + H(+) = 3'-dephospho-CoA + diphosphate. The protein operates within cofactor biosynthesis; coenzyme A biosynthesis; CoA from (R)-pantothenate: step 4/5. In terms of biological role, reversibly transfers an adenylyl group from ATP to 4'-phosphopantetheine, yielding dephospho-CoA (dPCoA) and pyrophosphate. This Acinetobacter baumannii (strain SDF) protein is Phosphopantetheine adenylyltransferase.